The following is a 262-amino-acid chain: Protein N-terminal and lysine N-methyltransferase EFM7 (262 aa).

S-adenosyl-L-methionine-binding positions include tryptophan 59, 86–88 (GAA), aspartate 108, tryptophan 143, and serine 171.

This sequence belongs to the class I-like SAM-binding methyltransferase superfamily. EFM7 family.

It is found in the cytoplasm. S-adenosyl-L-methionine-dependent protein methyltransferase that trimethylates the N-terminal glycine 'Gly-2' of elongation factor 1-alpha, before also catalyzing the mono- and dimethylation of 'Lys-3'. This chain is Protein N-terminal and lysine N-methyltransferase EFM7, found in Candida albicans (strain SC5314 / ATCC MYA-2876) (Yeast).